Here is a 1154-residue protein sequence, read N- to C-terminus: CRISPR-associated endoribonuclease Cas13a (1154 aa).

2 HEPN-like fold regions span residues 330–466 (TTSN…RFIN) and 923–1154 (FVHL…EMKK).

Belongs to the CRISPR-associated endoribonuclease Cas13a family. The cofactor is a divalent metal cation.

Its activity is regulated as follows. Target RNA acts as an activator for non-specific ssRNA degradation. In terms of biological role, CRISPR (clustered regularly interspaced short palindromic repeat), is an adaptive immune system that provides protection against mobile genetic elements (viruses, transposable elements and conjugative plasmids). CRISPR clusters contain sequences complementary to antecedent mobile elements and target invading nucleic acids. Unlike many single-component effectors, this CRISPR-Cas system targets RNA. CRISPR clusters are transcribed from pre-CRISPR RNA (crRNA) and processed into crRNA by this protein. Cleaves linear target ssRNA in a pre-crRNA-dependent fashion, preferentially before U residues. Binding a viable target RNA target activates this protein for non-specific RNA degradation in vitro (called collateral RNA degradation), which is fairly sensitive as it requires picomolar levels of viable target RNA. This Paludibacter propionicigenes (strain DSM 17365 / JCM 13257 / WB4) protein is CRISPR-associated endoribonuclease Cas13a.